Consider the following 564-residue polypeptide: Urease subunit alpha (564 aa).

One can recognise a Urease domain in the interval 126 to 564; sequence GGIDTHIHFI…LPMAQRYFLF (439 aa). Residues histidine 131, histidine 133, and lysine 214 each contribute to the Ni(2+) site. Lysine 214 carries the N6-carboxylysine modification. Histidine 216 lines the substrate pocket. Positions 243 and 269 each coordinate Ni(2+). Catalysis depends on histidine 317, which acts as the Proton donor. Aspartate 357 provides a ligand contact to Ni(2+).

The protein belongs to the metallo-dependent hydrolases superfamily. Urease alpha subunit family. Heterotrimer of UreA (gamma), UreB (beta) and UreC (alpha) subunits. Three heterotrimers associate to form the active enzyme. Ni cation serves as cofactor. Post-translationally, carboxylation allows a single lysine to coordinate two nickel ions.

The protein localises to the cytoplasm. The catalysed reaction is urea + 2 H2O + H(+) = hydrogencarbonate + 2 NH4(+). It functions in the pathway nitrogen metabolism; urea degradation; CO(2) and NH(3) from urea (urease route): step 1/1. In Burkholderia pseudomallei (strain 1710b), this protein is Urease subunit alpha.